The sequence spans 121 residues: Large ribosomal subunit protein bL19 (121 aa).

Belongs to the bacterial ribosomal protein bL19 family.

In terms of biological role, this protein is located at the 30S-50S ribosomal subunit interface and may play a role in the structure and function of the aminoacyl-tRNA binding site. This chain is Large ribosomal subunit protein bL19, found in Chloroherpeton thalassium (strain ATCC 35110 / GB-78).